The primary structure comprises 312 residues: Tetraacyldisaccharide 4'-kinase (312 aa).

60 to 67 (IAGGSGKT) contributes to the ATP binding site.

Belongs to the LpxK family.

It carries out the reaction a lipid A disaccharide + ATP = a lipid IVA + ADP + H(+). It functions in the pathway glycolipid biosynthesis; lipid IV(A) biosynthesis; lipid IV(A) from (3R)-3-hydroxytetradecanoyl-[acyl-carrier-protein] and UDP-N-acetyl-alpha-D-glucosamine: step 6/6. In terms of biological role, transfers the gamma-phosphate of ATP to the 4'-position of a tetraacyldisaccharide 1-phosphate intermediate (termed DS-1-P) to form tetraacyldisaccharide 1,4'-bis-phosphate (lipid IVA). In Helicobacter acinonychis (strain Sheeba), this protein is Tetraacyldisaccharide 4'-kinase.